Here is a 242-residue protein sequence, read N- to C-terminus: Type III pantothenate kinase (242 aa).

7–14 (DLGNSRFK) is a binding site for ATP. Residues Y91 and 98 to 101 (GVDR) contribute to the substrate site. Residue D100 is the Proton acceptor of the active site. T121 lines the ATP pocket. A substrate-binding site is contributed by T171.

This sequence belongs to the type III pantothenate kinase family. Homodimer. Requires NH4(+) as cofactor. K(+) is required as a cofactor.

It localises to the cytoplasm. The catalysed reaction is (R)-pantothenate + ATP = (R)-4'-phosphopantothenate + ADP + H(+). Its pathway is cofactor biosynthesis; coenzyme A biosynthesis; CoA from (R)-pantothenate: step 1/5. Catalyzes the phosphorylation of pantothenate (Pan), the first step in CoA biosynthesis. In Xanthomonas campestris pv. campestris (strain 8004), this protein is Type III pantothenate kinase.